The sequence spans 259 residues: PLPFSPPSTPVSPPSTPVSPPSTPVSPPSTPVSPPSTPVSPPSTPVSPPSTPVSPPSTPVSPPSTPVSPPSTPVSPPSTPVSPPSTPVSPPSTPVSPPSTPVSPPSSPAPGAVGGVNSSLSQRSTSEHWHASVSVQFERWRDRTPASGLRFAPLAEGWAILTAASCNLHNIRQRPGSSAADRRHCTRSTRSSRRMSRRHRHKGGLRGFVSRCRRSGCCRFSSFASPTIRSKLTGYGVADVGCGVLFVLRHTARRILARS.

Pro residues predominate over residues P1–P108. Disordered regions lie at residues P1–E127 and R174–G203. 15 consecutive repeat copies span residues S5–V11, S12–V18, S19–V25, S26–V32, S33–V39, S40–V46, S47–V53, S54–V60, S61–V67, S68–V74, S75–V81, S82–V88, S89–V95, S96–V102, and S103–A109. The tract at residues S5 to A109 is 15 X 7 AA repeats of S-P-P-S-T-P-V. The segment covering H184–G203 has biased composition (basic residues).

The chain is Merozoite surface protein CMZ-8 from Eimeria acervulina (Coccidian parasite).